The primary structure comprises 488 residues: MDPTAPLLTHGGEVEEDYAPARSWTDVKRVLSTESAKLWMIAAPVGFNIICQYGVSSVTNIFVGHIGEVELSAVSISLSVIGTFSFGFLLGMGSALETLCGQAYGAGQVNMLGVYMQRSWIILFVSCFFLLPIYIFATPVLRLLGQAEEIAVPAGQFTLLTIPQLFSLAFNFPTSKFLQAQSKVVAIAWIGFVALSLHVIMLWLFIIEFGWGTNGAALAFNITNWGTAIAQIVYVIGWCNEGWTGLSWLAFKEIWAFVRLSIASAVMLCLEIWYMMSIIVLTGRLDNAVIAVDSLSICMNINGLEAMLFIGINAAISVRVSNELGLGRPRAAKYSVYVTVFQSLLIGLVFMVAIIIARDHFAIIFTSSKVLQRAVSKLAYLLGITMVLNSVQPVVSGVAVGGGWQGLVAYINLGCYYIFGLPFGYLLGYIANFGVMGLWSGMIAGTALQTLLLLIVLYKTNWNKEVEETMERMKKWGGSETTSKDILA.

12 helical membrane passes run Leu-38 to Val-58, Ala-73 to Gly-93, Ile-121 to Leu-141, Ile-150 to Phe-170, Ile-187 to Ile-207, Leu-218 to Trp-238, Ile-262 to Thr-282, Ser-296 to Ile-316, Val-336 to Ile-356, Ala-379 to Gly-401, Val-408 to Gly-428, and Trp-439 to Lys-459.

The protein belongs to the multi antimicrobial extrusion (MATE) (TC 2.A.66.1) family. As to expression, highly expressed in inflorescence tissues, especially in floral epidermal guard cells including those of the anthers, stigma, siliques and nectaries. Also detected in the meristematic zone of the root apex and in the elongation zone through to the fully expanded cells of the differentiation zone.

The protein localises to the vacuole membrane. Its function is as follows. Multidrug and toxin efflux transporter involved in flavonoid metabolism. Required for proper reproductive development. This chain is Protein DETOXIFICATION 35, found in Arabidopsis thaliana (Mouse-ear cress).